We begin with the raw amino-acid sequence, 100 residues long: Nucleoid-associated protein Rcas_2292 (100 aa).

It belongs to the YbaB/EbfC family. In terms of assembly, homodimer.

Its subcellular location is the cytoplasm. It localises to the nucleoid. Binds to DNA and alters its conformation. May be involved in regulation of gene expression, nucleoid organization and DNA protection. The polypeptide is Nucleoid-associated protein Rcas_2292 (Roseiflexus castenholzii (strain DSM 13941 / HLO8)).